Consider the following 258-residue polypeptide: Imidazole glycerol phosphate synthase subunit HisF (258 aa).

Residues D11 and D130 contribute to the active site.

It belongs to the HisA/HisF family. In terms of assembly, heterodimer of HisH and HisF.

The protein resides in the cytoplasm. The enzyme catalyses 5-[(5-phospho-1-deoxy-D-ribulos-1-ylimino)methylamino]-1-(5-phospho-beta-D-ribosyl)imidazole-4-carboxamide + L-glutamine = D-erythro-1-(imidazol-4-yl)glycerol 3-phosphate + 5-amino-1-(5-phospho-beta-D-ribosyl)imidazole-4-carboxamide + L-glutamate + H(+). Its pathway is amino-acid biosynthesis; L-histidine biosynthesis; L-histidine from 5-phospho-alpha-D-ribose 1-diphosphate: step 5/9. In terms of biological role, IGPS catalyzes the conversion of PRFAR and glutamine to IGP, AICAR and glutamate. The HisF subunit catalyzes the cyclization activity that produces IGP and AICAR from PRFAR using the ammonia provided by the HisH subunit. In Methylobacterium sp. (strain 4-46), this protein is Imidazole glycerol phosphate synthase subunit HisF.